The primary structure comprises 172 residues: Ribosomally synthesized cyclic peptide phomopsin precursor phomA (172 aa).

Residues 1-18 form the signal peptide; the sequence is MRFTPAIVIAAFCSLAVA. Propeptides lie at residues 19-35, 42-50, 57-65, 72-79, 86-93, 100-108, 115-122, 129-137, 144-151, 158-165, and lysine 172; these read APAA…AVED, KKRGEAVED, KRGEAVED, and RKRGEAVED.

In terms of processing, phomA is processed by several endopeptidases including kexin proteases as well as the cluster-specific S41 family peptidase phomP1 and the oligopeptidase phomG to produce 10 identical copies of the hexapeptide Tyr-Val-Ile-Pro-Ile-Asp, that is further modified to yield phomapsins. The timing and order of proteolysis of the phomA precursor and PTMs are still unknown. Two tyrosinase-like enzymes, phomQ1 and phomQ2, catalyze the chlorination and hydroxylation of Tyr, respectively. PhomYb, is proposed to be involved in the construction of the macrocyclic structure. The other 4 ustYa family proteins may be involved in PTMs that generate the unique structure of phomopsin A. PhomYa is required for the hydroxylation of C-beta of Tyr. PhomYc, phomYd, and phomYe are responsible for the biosynthesis of 2,3-dehydroisoleucine (dIle), 2,3-dehydroaspartic acid (dAsp), and 3,4-dehydroproline (dPro), respectively. While dIle formation by phomYc is indispensable for the installation of dAsp by phomYd, the order of the other PTMs have not been elucidated yet. Most of the biosynthetic enzymes likely have broad substrate specificity, and thus, there might be a metabolic grid from a precursor to phomopsin A. The enzyme(s) responsible for the biosynthesis of 3,4-dehydrovaline (dVal) have also not been identified yet. Finally, phomM acts as an S-adenosylmethionine-dependent alpha-N-methyltransferase that catalyzes two successive N-methylation reactions, converting N-desmethyl-phomopsin A to phomopsin A and phomopsin A further to an N,N-dimethylated congener called phomopsin E.

It functions in the pathway mycotoxin biosynthesis. Ribosomally synthesized cyclic peptide phomopsin precursor; part of the gene cluster that mediates the biosynthesis of the phomopsins, a group of hexapeptide mycotoxins which infects lupins and causes lupinosis disease in livestock. The phomA translated product contains a 10-fold repeated peptide embedding the hexapeptide Tyr-Val-Ile-Pro-Ile-Asp, that is converted into phomapsins. After being excised from the precursor peptide by kexin proteases, the core peptides are cyclized and modified post-translationally by enzymes encoded within the corresponding gene cluster. The sequence is that of Ribosomally synthesized cyclic peptide phomopsin precursor phomA from Diaporthe leptostromiformis (Lupinosis disease fungus).